We begin with the raw amino-acid sequence, 322 residues long: FAD-dependent monooxygenase subE (322 aa).

Residues E35, G49, R108, and D313 each coordinate FAD.

It belongs to the paxM FAD-dependent monooxygenase family. FAD serves as cofactor.

It functions in the pathway secondary metabolite biosynthesis; terpenoid biosynthesis. FAD-dependent monooxygenase; part of the gene cluster that mediates the biosynthesis of the immunosuppressants subglutinols, meroterpenoids consisting of an alpha-pyrone (4-hydroxy-5,6-dimethyl-2-pyrone) moiety attached to a decalin core fused to a five-membered cyclic ether carrying a prenylside chain. The first step of the pathway is the synthesis of the alpha-pyrone moiety by the polyketide synthase subA via condensation of one acetyl-CoA starter unit with 3 malonyl-CoA units and 2 methylations. The alpha-pyrone is then combined with geranylgeranyl pyrophosphate (GGPP) formed by the GGPP synthase subD through the action of the prenyltransferase subC to yield a linear alpha-pyrone diterpenoid. Subsequent steps in the subglutinol biosynthetic pathway involve the decalin core formation, which is thought to be initiated by the epoxidation of the C10-C11 olefin by the FAD-dependent oxidoreductase subE. The following cyclization cascade would be catalyzed by the terpene cyclase subB. Lastly, the FAD-dependent dehydrogenase subF probably catalyzes the five-membered cyclic ether formation to complete the formation of subglutinol A. Subsequent redox reactions appear to give rise to subglutinol C and D, however, it remains unclear which enzymes are responsible for these transformations. SubD may have secondary function in the conversion of the identified subglutinols to subglutinol analog 45, which seems to be the major product of the cluster. The protein is FAD-dependent monooxygenase subE of Metarhizium robertsii (strain ARSEF 23 / ATCC MYA-3075) (Metarhizium anisopliae (strain ARSEF 23)).